Consider the following 647-residue polypeptide: MIKITFPDGAVREFESGVTTFDIAESISKSLAKKALAGKFNDQLIDTTRAIEEDGSIEIVTPDHKDAYEVLRHSAAHLFAQAAKRLFPNLHLGVGPAIAEGFYYDTDNAEGQISNEDLPRIEAEMQKIVTENYPCIREEVTKEEALELFKDDPYKVELINEHAGAGLTVYRQGEFVDLCRGPHVPSTGRIQVFHLLNVAGAYWRGNSDNNMMQRIYGTAWFDKKDLKAYLTRLEEAKERDHRKLGKELDLFMISQEVGQGLPFWLPDGATIRRTLERYITDKELASGYQHVYTPPLASVELYKTSGHWDHYQEDMFPVMDMGDGEEFVLRPMNCPHHIQVYKNHVRSYRELPIRIAELGMMHRYEKSGALSGLQRVREMTLNDGHIFVTPEQIQEEFQRALQLIIDVYADFNLTDYRFRLSYRDPNDTHKYYDNDEMWENAQSMLKAALDEMGVDYFEAEGEAAFYGPKLDIQVKTALGNEETLSTIQLDFLLPERFDLKYIGADGEEHRPVMIHRGVISTMERFTAILIETYKGAFPTWLAPHQVTVIPISNEAHIDYAWEVAKTLRDRGVRADVDDRNEKMQYKIRASQTSKIPYQLIVGDKEMEDKSVNVRRYGSKATHTESVEEFVENILADIARKSRPDAQA.

One can recognise a TGS domain in the interval 1–61 (MIKITFPDGA…EEDGSIEIVT (61 aa)). Residues 240 to 538 (DHRKLGKELD…LIETYKGAFP (299 aa)) form a catalytic region. Cysteine 334, histidine 385, and histidine 515 together coordinate Zn(2+).

Belongs to the class-II aminoacyl-tRNA synthetase family. In terms of assembly, homodimer. Zn(2+) serves as cofactor.

Its subcellular location is the cytoplasm. It catalyses the reaction tRNA(Thr) + L-threonine + ATP = L-threonyl-tRNA(Thr) + AMP + diphosphate + H(+). Catalyzes the attachment of threonine to tRNA(Thr) in a two-step reaction: L-threonine is first activated by ATP to form Thr-AMP and then transferred to the acceptor end of tRNA(Thr). Also edits incorrectly charged L-seryl-tRNA(Thr). The protein is Threonine--tRNA ligase of Streptococcus pyogenes serotype M18 (strain MGAS8232).